Here is a 433-residue protein sequence, read N- to C-terminus: Gamma-glutamyl phosphate reductase 1 (433 aa).

It belongs to the gamma-glutamyl phosphate reductase family.

The protein resides in the cytoplasm. It catalyses the reaction L-glutamate 5-semialdehyde + phosphate + NADP(+) = L-glutamyl 5-phosphate + NADPH + H(+). Its pathway is amino-acid biosynthesis; L-proline biosynthesis; L-glutamate 5-semialdehyde from L-glutamate: step 2/2. In terms of biological role, catalyzes the NADPH-dependent reduction of L-glutamate 5-phosphate into L-glutamate 5-semialdehyde and phosphate. The product spontaneously undergoes cyclization to form 1-pyrroline-5-carboxylate. The polypeptide is Gamma-glutamyl phosphate reductase 1 (Synechocystis sp. (strain ATCC 27184 / PCC 6803 / Kazusa)).